The primary structure comprises 139 residues: Peptide methionine sulfoxide reductase MsrB (139 aa).

One can recognise a MsrB domain in the interval 9 to 131 (TPSDNTELTE…NSASLSFIDD (123 aa)). Residues Cys-48, Cys-51, Cys-97, and Cys-100 each contribute to the Zn(2+) site. The Nucleophile role is filled by Cys-120.

This sequence belongs to the MsrB Met sulfoxide reductase family. Requires Zn(2+) as cofactor.

The catalysed reaction is L-methionyl-[protein] + [thioredoxin]-disulfide + H2O = L-methionyl-(R)-S-oxide-[protein] + [thioredoxin]-dithiol. This Pectobacterium carotovorum subsp. carotovorum (strain PC1) protein is Peptide methionine sulfoxide reductase MsrB.